A 196-amino-acid polypeptide reads, in one-letter code: Flagellin B2 (196 aa).

Positions 1–12 are excised as a propeptide; sequence MFEFITDEDERG.

The protein belongs to the archaeal flagellin family. In terms of processing, glycosylated.

It is found in the archaeal flagellum. In terms of biological role, flagellin is the subunit protein which polymerizes to form the filaments of archaeal flagella. This is Flagellin B2 (flaB2) from Halobacterium salinarum (strain ATCC 700922 / JCM 11081 / NRC-1) (Halobacterium halobium).